The sequence spans 517 residues: Crotonobetaine/carnitine--CoA ligase (517 aa).

The protein belongs to the ATP-dependent AMP-binding enzyme family.

It carries out the reaction 4-(trimethylamino)butanoate + ATP + CoA = 4-(trimethylamino)butanoyl-CoA + AMP + diphosphate. The catalysed reaction is crotonobetaine + ATP + CoA = crotonobetainyl-CoA + AMP + diphosphate. The enzyme catalyses (R)-carnitine + ATP + CoA = (R)-carnitinyl-CoA + AMP + diphosphate. The protein operates within amine and polyamine metabolism; carnitine metabolism. Functionally, catalyzes the transfer of CoA to carnitine, generating the initial carnitinyl-CoA needed for the CaiB reaction cycle. Also has activity toward crotonobetaine and gamma-butyrobetaine. This Escherichia coli O157:H7 protein is Crotonobetaine/carnitine--CoA ligase.